We begin with the raw amino-acid sequence, 425 residues long: Serine--tRNA ligase (425 aa).

The interval 110 to 134 (NLPSADAPEGKSEADNVEVKRWGEP) is disordered. Basic and acidic residues predominate over residues 117 to 134 (PEGKSEADNVEVKRWGEP). An L-serine-binding site is contributed by 233 to 235 (TAE). An ATP-binding site is contributed by 264–266 (RRE). Residue glutamate 287 participates in L-serine binding. 351–354 (EISS) is an ATP binding site. Serine 385 serves as a coordination point for L-serine.

It belongs to the class-II aminoacyl-tRNA synthetase family. Type-1 seryl-tRNA synthetase subfamily. Homodimer. The tRNA molecule binds across the dimer.

Its subcellular location is the cytoplasm. It carries out the reaction tRNA(Ser) + L-serine + ATP = L-seryl-tRNA(Ser) + AMP + diphosphate + H(+). It catalyses the reaction tRNA(Sec) + L-serine + ATP = L-seryl-tRNA(Sec) + AMP + diphosphate + H(+). The protein operates within aminoacyl-tRNA biosynthesis; selenocysteinyl-tRNA(Sec) biosynthesis; L-seryl-tRNA(Sec) from L-serine and tRNA(Sec): step 1/1. Catalyzes the attachment of serine to tRNA(Ser). Is also able to aminoacylate tRNA(Sec) with serine, to form the misacylated tRNA L-seryl-tRNA(Sec), which will be further converted into selenocysteinyl-tRNA(Sec). In Synechococcus sp. (strain RCC307), this protein is Serine--tRNA ligase.